A 94-amino-acid polypeptide reads, in one-letter code: Large ribosomal subunit protein bL25 (94 aa).

It belongs to the bacterial ribosomal protein bL25 family. Part of the 50S ribosomal subunit; part of the 5S rRNA/L5/L18/L25 subcomplex. Contacts the 5S rRNA. Binds to the 5S rRNA independently of L5 and L18.

This is one of the proteins that binds to the 5S RNA in the ribosome where it forms part of the central protuberance. The polypeptide is Large ribosomal subunit protein bL25 (Proteus mirabilis (strain HI4320)).